The chain runs to 205 residues: NADH-quinone oxidoreductase subunit C (205 aa).

Belongs to the complex I 30 kDa subunit family. In terms of assembly, NDH-1 is composed of 14 different subunits. Subunits NuoB, C, D, E, F, and G constitute the peripheral sector of the complex.

Its subcellular location is the cell inner membrane. The catalysed reaction is a quinone + NADH + 5 H(+)(in) = a quinol + NAD(+) + 4 H(+)(out). Its function is as follows. NDH-1 shuttles electrons from NADH, via FMN and iron-sulfur (Fe-S) centers, to quinones in the respiratory chain. The immediate electron acceptor for the enzyme in this species is believed to be ubiquinone. Couples the redox reaction to proton translocation (for every two electrons transferred, four hydrogen ions are translocated across the cytoplasmic membrane), and thus conserves the redox energy in a proton gradient. The polypeptide is NADH-quinone oxidoreductase subunit C (Nitrosospira multiformis (strain ATCC 25196 / NCIMB 11849 / C 71)).